The primary structure comprises 74 residues: DNA-directed RNA polymerase subunit omega (74 aa).

It belongs to the RNA polymerase subunit omega family. As to quaternary structure, the RNAP catalytic core consists of 2 alpha, 1 beta, 1 beta' and 1 omega subunit. When a sigma factor is associated with the core the holoenzyme is formed, which can initiate transcription.

It carries out the reaction RNA(n) + a ribonucleoside 5'-triphosphate = RNA(n+1) + diphosphate. Functionally, promotes RNA polymerase assembly. Latches the N- and C-terminal regions of the beta' subunit thereby facilitating its interaction with the beta and alpha subunits. The chain is DNA-directed RNA polymerase subunit omega from Campylobacter jejuni subsp. jejuni serotype O:6 (strain 81116 / NCTC 11828).